The primary structure comprises 500 residues: UPF0371 protein SZO_06760 (500 aa).

This sequence belongs to the UPF0371 family.

The polypeptide is UPF0371 protein SZO_06760 (Streptococcus equi subsp. zooepidemicus (strain H70)).